The chain runs to 321 residues: Cytochrome f (321 aa).

A signal peptide spans 1-35 (MQNTNTLNWINKLIYLSISIPIFFLILVTTYPNSV). Residues Tyr-38, Cys-58, Cys-61, and His-62 each coordinate heme. A helical transmembrane segment spans residues 287–307 (MEGLILFFISVILAQVFLVLK).

It belongs to the cytochrome f family. The 4 large subunits of the cytochrome b6-f complex are cytochrome b6, subunit IV (17 kDa polypeptide, petD), cytochrome f and the Rieske protein, while the 4 small subunits are PetG, PetL, PetM and PetN. The complex functions as a dimer. Heme is required as a cofactor.

It localises to the plastid. Its subcellular location is the chloroplast thylakoid membrane. Its function is as follows. Component of the cytochrome b6-f complex, which mediates electron transfer between photosystem II (PSII) and photosystem I (PSI), cyclic electron flow around PSI, and state transitions. In Chara vulgaris (Common stonewort), this protein is Cytochrome f.